Reading from the N-terminus, the 1935-residue chain is Myosin-7 (1935 aa).

Residues 32–81 enclose the Myosin N-terminal SH3-like domain; that stretch reads DLKKDVFVPDDKEEFVKAKIISREGGKITAETEHGKTVTVKEDQVLQQNP. The Myosin motor domain maps to 85–778; it reads DKIEDMAMLT…LLGLLEEMRD (694 aa). Lys129 bears the N6,N6,N6-trimethyllysine mark. 178 to 185 provides a ligand contact to ATP; the sequence is GESGAGKT. Residue Thr378 is modified to Phosphothreonine. Actin-binding stretches follow at residues 655–677 and 757–771; these read LNKL…IPNE and RFGH…GLLG. Positions 781-810 constitute an IQ domain; it reads LSRIITRIQAQSRGVLARMEFKKLLERRDS. A coiled-coil region spans residues 839-1935; it reads LLKSAETEKE…DIGTKGLNEE (1097 aa). 2 positions are modified to phosphoserine: Ser1137 and Ser1269. Thr1282 bears the Phosphothreonine mark. Tyr1308 carries the phosphotyrosine modification. A Phosphothreonine modification is found at Thr1309. At Ser1510 the chain carries Phosphoserine. Thr1513 bears the Phosphothreonine mark. Positions 1907-1935 are disordered; that stretch reads EERADIAESQVNKLRAKSRDIGTKGLNEE. The span at 1923 to 1935 shows a compositional bias: basic and acidic residues; it reads KSRDIGTKGLNEE.

The protein belongs to the TRAFAC class myosin-kinesin ATPase superfamily. Myosin family. Muscle myosin is a hexameric protein that consists of 2 heavy chain subunits (MHC), 2 alkali light chain subunits (MLC) and 2 regulatory light chain subunits (MLC-2). Interacts with ECPAS. Interacts (via C-terminus) with LRRC39.

The protein localises to the cytoplasm. Its subcellular location is the myofibril. The protein resides in the sarcomere. Functionally, myosins are actin-based motor molecules with ATPase activity essential for muscle contraction. Forms regular bipolar thick filaments that, together with actin thin filaments, constitute the fundamental contractile unit of skeletal and cardiac muscle. The sequence is that of Myosin-7 (MYH7) from Equus caballus (Horse).